The primary structure comprises 186 residues: MRSPQPHRSGGDTQQHFQSTVSVQKLKRFNSLILVFRFAAFCFSLASAVFMLTNSRGSDSLHWYNFDAFRYVFAANAIVAIYSLFEMAASVWEISRNATLFPEICQVWFDFGHDQVFAYLLLSANTAGTELARTLKDTCTDNKAFCVQSDIAIVLGFAGFLFLGISSLFSGFRVVCFIINGSRFYV.

Over 1-31 (MRSPQPHRSGGDTQQHFQSTVSVQKLKRFNS) the chain is Cytoplasmic. A helical membrane pass occupies residues 32–52 (LILVFRFAAFCFSLASAVFML). Residues 53 to 71 (TNSRGSDSLHWYNFDAFRY) are Extracellular-facing. Residues 72–92 (VFAANAIVAIYSLFEMAASVW) form a helical membrane-spanning segment. The Cytoplasmic segment spans residues 93–103 (EISRNATLFPE). The chain crosses the membrane as a helical span at residues 104-124 (ICQVWFDFGHDQVFAYLLLSA). The Extracellular segment spans residues 125–150 (NTAGTELARTLKDTCTDNKAFCVQSD). Residues 151–171 (IAIVLGFAGFLFLGISSLFSG) form a helical membrane-spanning segment. The Cytoplasmic portion of the chain corresponds to 172–186 (FRVVCFIINGSRFYV).

Belongs to the Casparian strip membrane proteins (CASP) family. As to quaternary structure, homodimer and heterodimers.

It localises to the cell membrane. In Populus trichocarpa (Western balsam poplar), this protein is CASP-like protein 4C2.